We begin with the raw amino-acid sequence, 271 residues long: Insulin-like growth factor-binding protein 5 (271 aa).

An N-terminal signal peptide occupies residues 1–19; it reads MVLTAVLLLLAACAGSAQG. In terms of domain architecture, IGFBP N-terminal spans 22–102; sequence SFVHCEPCDE…LHGRGVCLNE (81 aa). 6 cysteine pairs are disulfide-bonded: cysteine 26–cysteine 52, cysteine 29–cysteine 54, cysteine 37–cysteine 55, cysteine 44–cysteine 58, cysteine 66–cysteine 79, and cysteine 73–cysteine 99. A compositionally biased stretch (basic and acidic residues) spans 109 to 121; the sequence is AKIERDSREHEEP. The segment at 109–129 is disordered; sequence AKIERDSREHEEPTTSEMAEE. Serine 115 is subject to Phosphoserine. In terms of domain architecture, Thyroglobulin type-1 spans 188–262; that stretch reads QGPCRRHMEA…MEYVDGDFQC (75 aa). Cystine bridges form between cysteine 191/cysteine 218, cysteine 229/cysteine 240, and cysteine 242/cysteine 262.

Interacts with IGF1; this interaction enhances the growth stimulatory effects of IGF1 on fibroblasts. Interacts with CAV1; this interaction allows trafficking of IGFBP5 from the plasma membrane to the nucleus. Interacts with NCL; this interaction is necessary for IGFBP5 localization to the nucleus.

It is found in the secreted. Its subcellular location is the cytoplasm. The protein resides in the nucleus. Its function is as follows. Multifunctional protein that plays a critical role in regulating the availability of IGFs to their receptors and thereby regulates IGF-mediated cellular processes including proliferation, differentiation, and apoptosis in a cell-type specific manner. Increases the cell proliferation of osteoblasts, intestinal smooth muscle cells and neuroblastoma cells. Enhances adhesion and survival of epithelial cells but decreases adhesion of mesenchymal cells. Once secreted, acts as a major mediator of mTORC1-dependent feedback inhibition of IGF1 signaling. Also plays a role in the induction of extracellular matrix (ECM) production and deposition independently of its nuclear translocation and binding to IGFs. Acts itself as a growth factor that can act independently of IGFs to regulate bone formation. Acts as a ligand for the ROR1 receptor which triggers formation of ROR1/HER2 heterodimer to enhance CREB oncogenic signaling. The chain is Insulin-like growth factor-binding protein 5 (IGFBP5) from Bos taurus (Bovine).